The primary structure comprises 201 residues: Probable quinol oxidase subunit 3 (201 aa).

Helical transmembrane passes span 20 to 40, 62 to 82, 91 to 111, 133 to 153, and 172 to 192; these read LGFW…FATL, LVLI…ISIY, LMMF…GFEI, FFIL…WIIC, and FIVS…FTAV.

It belongs to the cytochrome c oxidase subunit 3 family.

The protein resides in the cell membrane. The catalysed reaction is 2 a quinol + O2 = 2 a quinone + 2 H2O. Functionally, catalyzes quinol oxidation with the concomitant reduction of oxygen to water. The polypeptide is Probable quinol oxidase subunit 3 (qoxC) (Staphylococcus haemolyticus (strain JCSC1435)).